Consider the following 363-residue polypeptide: Eukaryotic translation initiation factor 3 subunit H (363 aa).

One can recognise an MPN domain in the interval 13 to 163 (VQVEALVVMK…LRAFRLSTAF (151 aa)).

This sequence belongs to the eIF-3 subunit H family. As to quaternary structure, component of the eukaryotic translation initiation factor 3 (eIF-3) complex.

It is found in the cytoplasm. In terms of biological role, component of the eukaryotic translation initiation factor 3 (eIF-3) complex, which is involved in protein synthesis of a specialized repertoire of mRNAs and, together with other initiation factors, stimulates binding of mRNA and methionyl-tRNAi to the 40S ribosome. The eIF-3 complex specifically targets and initiates translation of a subset of mRNAs involved in cell proliferation. The chain is Eukaryotic translation initiation factor 3 subunit H from Pyricularia oryzae (strain 70-15 / ATCC MYA-4617 / FGSC 8958) (Rice blast fungus).